We begin with the raw amino-acid sequence, 344 residues long: UDP-N-acetylglucosamine--N-acetylmuramyl-(pentapeptide) pyrophosphoryl-undecaprenol N-acetylglucosamine transferase (344 aa).

Residues 9-11, N118, R157, S188, and Q282 contribute to the UDP-N-acetyl-alpha-D-glucosamine site; that span reads TGG.

This sequence belongs to the glycosyltransferase 28 family. MurG subfamily.

Its subcellular location is the cell inner membrane. It catalyses the reaction di-trans,octa-cis-undecaprenyl diphospho-N-acetyl-alpha-D-muramoyl-L-alanyl-D-glutamyl-meso-2,6-diaminopimeloyl-D-alanyl-D-alanine + UDP-N-acetyl-alpha-D-glucosamine = di-trans,octa-cis-undecaprenyl diphospho-[N-acetyl-alpha-D-glucosaminyl-(1-&gt;4)]-N-acetyl-alpha-D-muramoyl-L-alanyl-D-glutamyl-meso-2,6-diaminopimeloyl-D-alanyl-D-alanine + UDP + H(+). The protein operates within cell wall biogenesis; peptidoglycan biosynthesis. Functionally, cell wall formation. Catalyzes the transfer of a GlcNAc subunit on undecaprenyl-pyrophosphoryl-MurNAc-pentapeptide (lipid intermediate I) to form undecaprenyl-pyrophosphoryl-MurNAc-(pentapeptide)GlcNAc (lipid intermediate II). This Aquifex aeolicus (strain VF5) protein is UDP-N-acetylglucosamine--N-acetylmuramyl-(pentapeptide) pyrophosphoryl-undecaprenol N-acetylglucosamine transferase.